The chain runs to 478 residues: Odorant receptor coreceptor (478 aa).

The Cytoplasmic segment spans residues 1–43 (MMKMKQQGLVADLLPNIRVMKTFGHFVFNYYNDNSSKYLHKVY). The chain crosses the membrane as a helical span at residues 44-64 (CCVNLFMLLLQFGLCAVNLIV). Topologically, residues 65-73 (ESADVDDLT) are extracellular. The chain crosses the membrane as a helical span at residues 74-94 (ANTITLLFFTHSIVKICYFAI). The Cytoplasmic portion of the chain corresponds to 95-133 (RSKYFYRTWAIWNNPNSHPLFAESNARYHAIALKKMRLL). Residues 134 to 154 (LFLVGGTTMLAAVAWTVLTFF) traverse the membrane as a helical segment. At 155–190 (EHPIRKIVDPVTNETEIIELPQLLIRSFYPFDAGKG) the chain is on the extracellular side. N167 is a glycosylation site (N-linked (GlcNAc...) asparagine). The helical transmembrane segment at 191-211 (ITHVLVLVYQFYWVLFMLIDA) threads the bilayer. The Cytoplasmic segment spans residues 212-349 (NSLDVLFCSW…IVRLVTAVGD (138 aa)). Positions 261–281 (SADHLRDGDNPPPPPPPQSDN) are disordered. A helical membrane pass occupies residues 350–370 (AYGFALLLHMLTTTITLTLLA). The Extracellular portion of the chain corresponds to 371 to 382 (YQATKVNGINVY). The helical transmembrane segment at 383-403 (AASTIGYILYTFGQVFLFCIF) threads the bilayer. Over 404-454 (GNRLIEESTSVMEAAYSCHWYDGSEEAKTFVQIVCQQCQKAMSISGAKFFT) the chain is Cytoplasmic. The helical transmembrane segment at 455–475 (VSLDLFASVLGAVVTYFMVLV) threads the bilayer. Residues 476–478 (QLK) are Extracellular-facing.

The protein belongs to the insect chemoreceptor superfamily. Heteromeric odorant receptor channel (TC 1.A.69) family. Orco subfamily. As to quaternary structure, heterodimer with conventional odorant receptors (ORs). In terms of tissue distribution, present in antennae (at protein level).

Its subcellular location is the cell membrane. Functionally, odorant coreceptor which complexes with conventional odorant receptors (ORs) to form odorant-sensing units, providing sensitive and prolonged odorant signaling and calcium permeability. Obligate coreceptor of all odorant receptors. Orco is a universal and integral part of the functional odorant receptor, involved in the dendritic localization of other olfactory receptors. Can form functional ion channels in the absence of an odor-binding odorant receptor. Plays a central role in the perception of olfactory stimuli in ants and is essential for ant social organization. Required for pheromone sensing. Also required for the development and maintenance of odorant receptor neurons (ORNs) and of antennal lobe glomeruli. This chain is Odorant receptor coreceptor, found in Ooceraea biroi (Clonal raider ant).